The primary structure comprises 232 residues: Flagellar L-ring protein (232 aa).

The signal sequence occupies residues 1–21; that stretch reads MQKYALHAYPVMALMVATLTG. A lipid anchor (N-palmitoyl cysteine) is attached at cysteine 22. Cysteine 22 carries S-diacylglycerol cysteine lipidation.

The protein belongs to the FlgH family. In terms of assembly, the basal body constitutes a major portion of the flagellar organelle and consists of four rings (L,P,S, and M) mounted on a central rod.

The protein localises to the cell outer membrane. It is found in the bacterial flagellum basal body. Assembles around the rod to form the L-ring and probably protects the motor/basal body from shearing forces during rotation. In Salmonella gallinarum (strain 287/91 / NCTC 13346), this protein is Flagellar L-ring protein.